The chain runs to 245 residues: Triosephosphate isomerase (245 aa).

Residue 9-11 (NWK) coordinates substrate. His-92 acts as the Electrophile in catalysis. The Proton acceptor role is filled by Glu-164. Substrate contacts are provided by residues Gly-170, Ser-209, and 230–231 (GG).

This sequence belongs to the triosephosphate isomerase family. In terms of assembly, homodimer.

The protein localises to the cytoplasm. The enzyme catalyses D-glyceraldehyde 3-phosphate = dihydroxyacetone phosphate. Its pathway is carbohydrate biosynthesis; gluconeogenesis. It participates in carbohydrate degradation; glycolysis; D-glyceraldehyde 3-phosphate from glycerone phosphate: step 1/1. Involved in the gluconeogenesis. Catalyzes stereospecifically the conversion of dihydroxyacetone phosphate (DHAP) to D-glyceraldehyde-3-phosphate (G3P). This is Triosephosphate isomerase from Cupriavidus necator (strain ATCC 17699 / DSM 428 / KCTC 22496 / NCIMB 10442 / H16 / Stanier 337) (Ralstonia eutropha).